Here is a 335-residue protein sequence, read N- to C-terminus: Dehydration-responsive element-binding protein 2A (335 aa).

Disordered stretches follow at residues 1–32 (MAVY…GTTV) and 50–74 (STKK…GPEN). A Nuclear localization signal motif is present at residues 19 to 55 (RKRKSRSRGDGTTVAERLKRWKEYNETVEEVSTKKRK). Over residues 52-66 (KKRKVPAKGSKKGCM) the composition is skewed to basic residues. Residues 78–135 (SFRGVRQRIWGKWVAEIREPNRGSRLWLGTFPTAQEAASAYDEAAKAMYGPLARLNFP) constitute a DNA-binding region (AP2/ERF). The disordered stretch occupies residues 279–304 (QDRYPGNSVANGSYRPESQQSGFDPL). Polar residues predominate over residues 286-304 (SVANGSYRPESQQSGFDPL).

This sequence belongs to the AP2/ERF transcription factor family. ERF subfamily. Interacts with MED25. Binds to DPB3-1 in the nucleus during heat-stress. In terms of processing, ubiquitinated by DRIP1 and DRIP2. Ubiquitination probably leads to its subsequent degradation, thus negatively regulating response to drought. As to expression, expressed preferentially in roots and stems, and at a lower level in leaves.

It localises to the nucleus. Functionally, transcriptional activator that binds specifically to the DNA sequence 5'-[AG]CCGAC-3'. Binding to the C-repeat/DRE element mediates high salinity- and dehydration-inducible transcription. Promotes the expression of heat stress-inducible genes by contributing to the formation of a heat stress-specific transcriptional complex with NF-Y subunits (e.g. DPB3-1, NF-YA2 and NF-YB3) at the promoter of target genes, thus promoting heat tolerance. The sequence is that of Dehydration-responsive element-binding protein 2A from Arabidopsis thaliana (Mouse-ear cress).